Consider the following 240-residue polypeptide: Large ribosomal subunit protein uL2 (240 aa).

Residues 1–11 (MGKRLISQNRG) are compositionally biased toward polar residues. Disordered regions lie at residues 1-28 (MGKR…KGAV) and 206-240 (GGGR…TGRK). Basic residues-rich tracts occupy residues 13–28 (GTPK…KGAV) and 224–240 (SPGR…TGRK).

This sequence belongs to the universal ribosomal protein uL2 family. Part of the 50S ribosomal subunit. Forms a bridge to the 30S subunit in the 70S ribosome.

Its function is as follows. One of the primary rRNA binding proteins. Required for association of the 30S and 50S subunits to form the 70S ribosome, for tRNA binding and peptide bond formation. It has been suggested to have peptidyltransferase activity; this is somewhat controversial. Makes several contacts with the 16S rRNA in the 70S ribosome. This is Large ribosomal subunit protein uL2 from Methanococcus maripaludis (strain C5 / ATCC BAA-1333).